The primary structure comprises 393 residues: Lipid-A-disaccharide synthase (393 aa).

It belongs to the LpxB family.

The enzyme catalyses a lipid X + a UDP-2-N,3-O-bis[(3R)-3-hydroxyacyl]-alpha-D-glucosamine = a lipid A disaccharide + UDP + H(+). The protein operates within bacterial outer membrane biogenesis; LPS lipid A biosynthesis. Its function is as follows. Condensation of UDP-2,3-diacylglucosamine and 2,3-diacylglucosamine-1-phosphate to form lipid A disaccharide, a precursor of lipid A, a phosphorylated glycolipid that anchors the lipopolysaccharide to the outer membrane of the cell. This Bordetella pertussis (strain Tohama I / ATCC BAA-589 / NCTC 13251) protein is Lipid-A-disaccharide synthase.